Reading from the N-terminus, the 143-residue chain is Actin-depolymerizing factor 5 (143 aa).

The ADF-H domain occupies 11 to 143 (GMNVKEECQR…GYDVIRGRAQ (133 aa)).

It belongs to the actin-binding proteins ADF family.

Actin-depolymerizing protein. Severs actin filaments (F-actin) and binds to actin monomers. This chain is Actin-depolymerizing factor 5 (ADF5), found in Oryza sativa subsp. japonica (Rice).